A 486-amino-acid chain; its full sequence is Cardiolipin synthase A (486 aa).

2 helical membrane-spanning segments follow: residues 3–23 (TFYT…IAGV) and 38–58 (MAWL…YLSF). PLD phosphodiesterase domains follow at residues 219-246 (MDLR…VDPR) and 399-426 (KDGL…DMRS). Catalysis depends on residues His-224, Lys-226, Asp-231, His-404, Lys-406, and Asp-411.

The protein belongs to the phospholipase D family. Cardiolipin synthase subfamily. ClsA sub-subfamily.

Its subcellular location is the cell inner membrane. It carries out the reaction 2 a 1,2-diacyl-sn-glycero-3-phospho-(1'-sn-glycerol) = a cardiolipin + glycerol. Its function is as follows. Catalyzes the reversible phosphatidyl group transfer from one phosphatidylglycerol molecule to another to form cardiolipin (CL) (diphosphatidylglycerol) and glycerol. In Pectobacterium carotovorum subsp. carotovorum (strain PC1), this protein is Cardiolipin synthase A.